The sequence spans 239 residues: Ribonuclease PH (239 aa).

Residues R87 and 125–127 (GTR) contribute to the phosphate site.

The protein belongs to the RNase PH family. As to quaternary structure, homohexameric ring arranged as a trimer of dimers.

It catalyses the reaction tRNA(n+1) + phosphate = tRNA(n) + a ribonucleoside 5'-diphosphate. Its function is as follows. Phosphorolytic 3'-5' exoribonuclease that plays an important role in tRNA 3'-end maturation. Removes nucleotide residues following the 3'-CCA terminus of tRNAs; can also add nucleotides to the ends of RNA molecules by using nucleoside diphosphates as substrates, but this may not be physiologically important. Probably plays a role in initiation of 16S rRNA degradation (leading to ribosome degradation) during starvation. The chain is Ribonuclease PH from Cyanothece sp. (strain PCC 7425 / ATCC 29141).